Reading from the N-terminus, the 273-residue chain is Large ribosomal subunit protein uL2 (273 aa).

2 disordered regions span residues 28–53 and 221–273; these read KPFA…TTRH and RGTA…RRSK. The span at 39-48 shows a compositional bias: low complexity; it reads KSGGRNNNGR.

This sequence belongs to the universal ribosomal protein uL2 family. In terms of assembly, part of the 50S ribosomal subunit. Forms a bridge to the 30S subunit in the 70S ribosome.

One of the primary rRNA binding proteins. Required for association of the 30S and 50S subunits to form the 70S ribosome, for tRNA binding and peptide bond formation. It has been suggested to have peptidyltransferase activity; this is somewhat controversial. Makes several contacts with the 16S rRNA in the 70S ribosome. The protein is Large ribosomal subunit protein uL2 of Enterobacter sp. (strain 638).